The sequence spans 83 residues: MLRNVLALRQIAQRTISTTSRRHFENKVPEKQKLFQEDNGMPVHLKGGTSDALLYRATMLLTVGGTAYAIYMLAMAAFPKKQN.

The N-terminal 23 residues, 1–23 (MLRNVLALRQIAQRTISTTSRRH), are a transit peptide targeting the mitochondrion. Over 24–48 (FENKVPEKQKLFQEDNGMPVHLKGG) the chain is Mitochondrial matrix. An N6-acetyllysine modification is found at lysine 33. A helical membrane pass occupies residues 49-77 (TSDALLYRATMLLTVGGTAYAIYMLAMAA). Residues 78 to 83 (FPKKQN) are Mitochondrial intermembrane-facing.

This sequence belongs to the cytochrome c oxidase VIIa family. Component of the cytochrome c oxidase (complex IV, CIV), a multisubunit enzyme composed of 14 subunits. The complex is composed of a catalytic core of 3 subunits MT-CO1, MT-CO2 and MT-CO3, encoded in the mitochondrial DNA, and 11 supernumerary subunits COX4I, COX5A, COX5B, COX6A, COX6B, COX6C, COX7A, COX7B, COX7C, COX8 and NDUFA4, which are encoded in the nuclear genome. The complex exists as a monomer or a dimer and forms supercomplexes (SCs) in the inner mitochondrial membrane with NADH-ubiquinone oxidoreductase (complex I, CI) and ubiquinol-cytochrome c oxidoreductase (cytochrome b-c1 complex, complex III, CIII), resulting in different assemblies (supercomplex SCI(1)III(2)IV(1) and megacomplex MCI(2)III(2)IV(2)). Interacts with PET100.

Its subcellular location is the mitochondrion inner membrane. The protein operates within energy metabolism; oxidative phosphorylation. In terms of biological role, component of the cytochrome c oxidase, the last enzyme in the mitochondrial electron transport chain which drives oxidative phosphorylation. The respiratory chain contains 3 multisubunit complexes succinate dehydrogenase (complex II, CII), ubiquinol-cytochrome c oxidoreductase (cytochrome b-c1 complex, complex III, CIII) and cytochrome c oxidase (complex IV, CIV), that cooperate to transfer electrons derived from NADH and succinate to molecular oxygen, creating an electrochemical gradient over the inner membrane that drives transmembrane transport and the ATP synthase. Cytochrome c oxidase is the component of the respiratory chain that catalyzes the reduction of oxygen to water. Electrons originating from reduced cytochrome c in the intermembrane space (IMS) are transferred via the dinuclear copper A center (CU(A)) of subunit 2 and heme A of subunit 1 to the active site in subunit 1, a binuclear center (BNC) formed by heme A3 and copper B (CU(B)). The BNC reduces molecular oxygen to 2 water molecules using 4 electrons from cytochrome c in the IMS and 4 protons from the mitochondrial matrix. The sequence is that of Cytochrome c oxidase subunit 7A2, mitochondrial (Cox7a2) from Rattus norvegicus (Rat).